A 177-amino-acid polypeptide reads, in one-letter code: Large ribosomal subunit protein uL6 (177 aa).

This sequence belongs to the universal ribosomal protein uL6 family. In terms of assembly, part of the 50S ribosomal subunit.

This protein binds to the 23S rRNA, and is important in its secondary structure. It is located near the subunit interface in the base of the L7/L12 stalk, and near the tRNA binding site of the peptidyltransferase center. The protein is Large ribosomal subunit protein uL6 of Rickettsia bellii (strain OSU 85-389).